The following is a 59-amino-acid chain: U-scoloptoxin(23)-Er2a (59 aa).

This sequence belongs to the scoloptoxin-23 family. In terms of processing, contains 1 disulfide bond. As to expression, expressed by the venom gland.

It localises to the secreted. This Ethmostigmus rubripes (Giant centipede) protein is U-scoloptoxin(23)-Er2a.